The chain runs to 151 residues: UPAR/Ly6 domain-containing protein crok (151 aa).

The signal sequence occupies residues 1-23 (MKTLEKYILFAIVLCCLLQLGQA). Over 24–128 (IKCWDCRSDN…KDGCNSAGIH (105 aa)) the chain is Lumenal. 5 cysteine pairs are disulfide-bonded: cysteine 26-cysteine 68, cysteine 29-cysteine 37, cysteine 51-cysteine 85, cysteine 100-cysteine 114, and cysteine 116-cysteine 122. N-linked (GlcNAc...) asparagine glycosylation is present at asparagine 43. Residue serine 124 is the site of GPI-anchor amidated serine attachment. Positions 125–151 (AGIHRLGLMGVLTGTLLSVIVAHLLRQ) are cleaved as a propeptide — removed in mature form. Residues 129-149 (RLGLMGVLTGTLLSVIVAHLL) traverse the membrane as a helical segment. Topologically, residues 150 to 151 (RQ) are cytoplasmic.

This sequence belongs to the quiver family.

It localises to the vesicle. It is found in the membrane. The protein localises to the endomembrane system. Functionally, required for septate junction assembly, possibly by organizing the preassembly and transport of septate junction proteins including dlg1/disks large 1 and Nrx-IV/Neurexin-IV. Involved in paracellular barrier functions of trachea, hindgut and salivary gland mediated by epithelial cell septate junctions. The protein is UPAR/Ly6 domain-containing protein crok of Drosophila melanogaster (Fruit fly).